The sequence spans 162 residues: MRKTFLTLLCVSSAIAHAADEDITFHGTLLSPPTCSISGGKTIEVEFRDLIIDDINGNYGRKEVPYELTCDSTTRHPDWEMTLTWTGTQTSFNDAAIETDVPGFGIELQHDGQRFKLNTPLAINATDFTQKPKLEAVPVKASDAVLSDTNFSAYATLRVDYQ.

The signal sequence occupies residues M1–A18.

The protein belongs to the fimbrial protein family.

In terms of biological role, part of the yfcOPQRSUV fimbrial operon. Could contribute to adhesion to various surfaces in specific environmental niches. Increases adhesion to eukaryotic T24 bladder epithelial cells in the absence of fim genes. This is an uncharacterized protein from Escherichia coli (strain K12).